Here is a 248-residue protein sequence, read N- to C-terminus: Cyclin-Q (248 aa).

At M1 the chain carries N-acetylmethionine. The segment covering 1 to 12 (MEAPEGGGGGPA) has biased composition (gly residues). The segment at 1 to 21 (MEAPEGGGGGPAARGPEGQPA) is disordered.

Belongs to the cyclin family. Cyclin-like FAM58 subfamily. In terms of assembly, associates with CDK10 to promote its kinase activity. Interacts with SALL1.

Functionally, activating cyclin for the cyclin-associated kinase CDK10. The sequence is that of Cyclin-Q from Homo sapiens (Human).